A 178-amino-acid chain; its full sequence is Large ribosomal subunit protein uL6 (178 aa).

Belongs to the universal ribosomal protein uL6 family. Part of the 50S ribosomal subunit.

In terms of biological role, this protein binds to the 23S rRNA, and is important in its secondary structure. It is located near the subunit interface in the base of the L7/L12 stalk, and near the tRNA binding site of the peptidyltransferase center. The polypeptide is Large ribosomal subunit protein uL6 (Helicobacter pylori (strain Shi470)).